The chain runs to 423 residues: Putative competence-damage inducible protein (423 aa).

The protein belongs to the CinA family.

The sequence is that of Putative competence-damage inducible protein from Streptococcus equi subsp. zooepidemicus (strain MGCS10565).